Consider the following 128-residue polypeptide: MLGVLLVLHGSKIPEWKDVGIKYAEYLSRYFNLVEFGFLEFNKPTLSEALSNLLAKGANKIVVVPLLFATGTHFKRDIPRLLGIDGDEKKIQYMGKEIEIIIADPLGFDEKIGEVLVKGVNETYNKNY.

The Proton acceptor role is filled by His9. His9 contributes to the Co(2+) binding site. Residues Lys43 and 68 to 73 (FATGTH) contribute to the substrate site. His73 is a Co(2+) binding site.

Belongs to the CbiX family. CbiXS subfamily. Homotetramer; dimer of dimers.

The enzyme catalyses Co-sirohydrochlorin + 2 H(+) = sirohydrochlorin + Co(2+). The protein operates within cofactor biosynthesis; adenosylcobalamin biosynthesis; cob(II)yrinate a,c-diamide from sirohydrochlorin (anaerobic route): step 1/10. Its function is as follows. Catalyzes the insertion of Co(2+) into sirohydrochlorin as part of the anaerobic pathway to cobalamin biosynthesis. The protein is Sirohydrochlorin cobaltochelatase of Saccharolobus islandicus (strain Y.G.57.14 / Yellowstone #1) (Sulfolobus islandicus).